A 246-amino-acid polypeptide reads, in one-letter code: Small ribosomal subunit protein uS3 (246 aa).

One can recognise a KH type-2 domain in the interval 23 to 94; the sequence is LNEFLTRELA…RIELYAEKVA (72 aa). The tract at residues 201–246 is disordered; sequence GPKKPLPDNVSVVEPKEEKIYETPETEYKIPPPSKPLDDLSEAKVL. Basic and acidic residues-rich tracts occupy residues 214–228 and 236–246; these read EPKE…ETEY and PLDDLSEAKVL. 2 positions are modified to phosphothreonine: T223 and T226. S241 carries the post-translational modification Phosphoserine.

The protein belongs to the universal ribosomal protein uS3 family. In terms of assembly, interacts with LTV1; the interaction is RNA-independent.

The protein resides in the cytoplasm. Its subcellular location is the nucleus. Its function is as follows. Has DNA repair activity directed towards the mutagenic lesions 8-oxoguanine and abasic sites in DNA. It can cleave DNA containing 8-oxoguanine residues efficiently. Also acts as an ap lyase, cleaving phosphodiester bonds via a beta,delta elimination reaction. This chain is Small ribosomal subunit protein uS3 (RpS3), found in Drosophila melanogaster (Fruit fly).